Reading from the N-terminus, the 326-residue chain is WRKY transcription factor 8 (326 aa).

Residues 115–172 (VRVSASPSSSEADHHPGEDSGKIRKKREVRDGGEDDQRSQKVVKTKKKEEKKKEPRVS) are disordered. Basic and acidic residues-rich tracts occupy residues 125 to 153 (EADH…DQRS) and 161 to 170 (KKEEKKKEPR). The segment at residues 177-242 (TEVDHLEDGY…YESQHNHPIP (66 aa)) is a DNA-binding region (WRKY).

The protein belongs to the WRKY group II-c family. As to quaternary structure, interacts with VQ9 (via N-terminus). As to expression, highly expressed in roots and at lower levels in rosette leaves, cauline leaves, stems, flowers and siliques.

Its subcellular location is the nucleus. In terms of biological role, transcription factor. Interacts specifically with the W box (5'-TTGAC[CT]-3'), a frequently occurring stress-responsive cis-acting element. Functions as a positive regulator of salt stress response. Binds the W box of LTI78/RD29A stress-response gene and directly regulates its transcription under salt stress. Functions antagonistically with VQ9 to regulate sodium and potassium homeostasis under salt stress by regulating the expression of downstream SOS (SALT OVERLY SENSITIVE) stress-responsive genes. The DNA-binding activity of WRKY8 is decreased by VQ9. Functions as a negative regulator of basal resistance to the bacterial pathogen P.syringae and as positive regulator of resistance to the fungal pathogen to B.cinerea. Functions as a positive regulator of defense response againt tobamovirus (TMV) by regulating both the abscisic acid and ethylene signaling pathways. Positively regulates ABI4 expression and negatively modulates ACS6 and ERF104 expression by directly binding to the W box consensus motifs within their promoters. This chain is WRKY transcription factor 8 (WRKY8), found in Arabidopsis thaliana (Mouse-ear cress).